A 798-amino-acid chain; its full sequence is General transcription and DNA repair factor IIH helicase/translocase subunit XPB (798 aa).

2 disordered regions span residues 1 to 62 (MGPP…EQIN) and 235 to 254 (PPGA…GADG). The Nuclear localization signal signature appears at 6 to 22 (KSRKDRSGGDKFGKKRR). The span at 10 to 25 (DRSGGDKFGKKRRAED) shows a compositional bias: basic and acidic residues. The span at 33 to 42 (DDNDSLDATE) shows a compositional bias: acidic residues. The Helicase ATP-binding domain maps to 343–504 (MFGNGRARSG…DLNFLIGPKL (162 aa)). 360 to 367 (AGKSLVGV) provides a ligand contact to ATP. A DEVH box motif is present at residues 457–460 (DEVH). In terms of domain architecture, Helicase C-terminal spans 558–713 (RSCQFLIKYH…KVITHLKGMD (156 aa)). The interval 746–765 (LPGEPGYRPSGSGGAVRRVG) is disordered.

Belongs to the helicase family. RAD25/XPB subfamily. In terms of assembly, component of the 7-subunit TFIIH core complex composed of haywire/XPB/ERCC3, XPD/ERCC2, GTF2H1, GTF2H2, GTF2H3, GTF2H4 and GTF2H5, which is active in NER. The core complex associates with the 3-subunit CDK-activating kinase (CAK) module composed of CCNH/cyclin H, CDK7 and MNAT1 to form the 10-subunit holoenzyme (holo-TFIIH) active in transcription. Interacts with PUF60. Interacts with ATF7IP. Interacts with Epstein-Barr virus EBNA2.

It localises to the nucleus. The catalysed reaction is Couples ATP hydrolysis with the unwinding of duplex DNA by translocating in the 3'-5' direction.. The enzyme catalyses ATP + H2O = ADP + phosphate + H(+). Functionally, ATP-dependent 3'-5' DNA helicase/translocase; binds dsDNA rather than ssDNA, unzipping it in a translocase rather than classical helicase activity. Component of the general transcription and DNA repair factor IIH (TFIIH) core complex. When complexed to CDK-activating kinase (CAK), involved in RNA transcription by RNA polymerase II. The ATPase activity of XPB/ERCC3, but not its helicase activity, is required for DNA opening; it may wrap around the damaged DNA wedging it open, causing localized melting and twisting that allows XPD/ERCC2 helicase to anchor. The ATP-dependent helicase activity of XPB/ERCC3 may be required for promoter escape. Also involved in transcription-coupled nucleotide excision repair (NER) of damaged DNA. In NER, TFIIH acts by opening DNA around the lesion to allow the excision of the damaged oligonucleotide and its replacement by a new DNA fragment. The structure of the TFIIH transcription complex differs from the NER-TFIIH complex; large movements by XPD/ERCC2 and XPB/ERCC3 are stabilized by XPA. In Drosophila melanogaster (Fruit fly), this protein is General transcription and DNA repair factor IIH helicase/translocase subunit XPB (hay).